A 293-amino-acid polypeptide reads, in one-letter code: Formamidopyrimidine-DNA glycosylase (293 aa).

Catalysis depends on P2, which acts as the Schiff-base intermediate with DNA. The active-site Proton donor is E3. K60 serves as the catalytic Proton donor; for beta-elimination activity. 3 residues coordinate DNA: H110, R129, and R174. The FPG-type zinc finger occupies 259-293; it reads NVYRRTGKECRKCGNLIEKQKIAGRSTHWCPNCQK. R283 acts as the Proton donor; for delta-elimination activity in catalysis.

It belongs to the FPG family. As to quaternary structure, monomer. It depends on Zn(2+) as a cofactor.

The catalysed reaction is Hydrolysis of DNA containing ring-opened 7-methylguanine residues, releasing 2,6-diamino-4-hydroxy-5-(N-methyl)formamidopyrimidine.. The enzyme catalyses 2'-deoxyribonucleotide-(2'-deoxyribose 5'-phosphate)-2'-deoxyribonucleotide-DNA = a 3'-end 2'-deoxyribonucleotide-(2,3-dehydro-2,3-deoxyribose 5'-phosphate)-DNA + a 5'-end 5'-phospho-2'-deoxyribonucleoside-DNA + H(+). Its function is as follows. Involved in base excision repair of DNA damaged by oxidation or by mutagenic agents. Acts as a DNA glycosylase that recognizes and removes damaged bases. Has a preference for oxidized purines, such as 7,8-dihydro-8-oxoguanine (8-oxoG). Has AP (apurinic/apyrimidinic) lyase activity and introduces nicks in the DNA strand. Cleaves the DNA backbone by beta-delta elimination to generate a single-strand break at the site of the removed base with both 3'- and 5'-phosphates. The chain is Formamidopyrimidine-DNA glycosylase from Prochlorococcus marinus (strain MIT 9312).